Reading from the N-terminus, the 179-residue chain is Bifunctional protein PyrR (179 aa).

The short motif at 99–111 is the PRPP-binding element; that stretch reads VILVDDVLYTGRT.

Belongs to the purine/pyrimidine phosphoribosyltransferase family. PyrR subfamily. As to quaternary structure, homodimer and homohexamer; in equilibrium.

The enzyme catalyses UMP + diphosphate = 5-phospho-alpha-D-ribose 1-diphosphate + uracil. Functionally, regulates transcriptional attenuation of the pyrimidine nucleotide (pyr) operon by binding in a uridine-dependent manner to specific sites on pyr mRNA. This disrupts an antiterminator hairpin in the RNA and favors formation of a downstream transcription terminator, leading to a reduced expression of downstream genes. Its function is as follows. Also displays a weak uracil phosphoribosyltransferase activity which is not physiologically significant. The sequence is that of Bifunctional protein PyrR from Brevibacillus brevis (strain 47 / JCM 6285 / NBRC 100599).